Here is a 62-residue protein sequence, read N- to C-terminus: Phospholipase A2 superbin a (62 aa).

3 residues coordinate Ca(2+): Tyr28, Gly30, and Gly32. Cys29 and Cys45 are disulfide-bonded. Residue His48 is part of the active site. Asp49 is a Ca(2+) binding site.

Requires Ca(2+) as cofactor. In terms of tissue distribution, expressed by the venom gland.

The protein localises to the secreted. It carries out the reaction a 1,2-diacyl-sn-glycero-3-phosphocholine + H2O = a 1-acyl-sn-glycero-3-phosphocholine + a fatty acid + H(+). Snake venom phospholipase A2 (PLA2) that inhibits collagen-induced platelet aggregation. In terms of inhibition of platelet aggregation, superbin a is more potent as superbin b, c, and d. PLA2 catalyzes the calcium-dependent hydrolysis of the 2-acyl groups in 3-sn-phosphoglycerides. The protein is Phospholipase A2 superbin a of Austrelaps superbus (Lowland copperhead snake).